A 121-amino-acid polypeptide reads, in one-letter code: uncharacterized protein (121 aa).

The disordered stretch occupies residues 1–121 (MGQVLSICSS…QQEREQIKWD (121 aa)). G2 carries N-myristoyl glycine lipidation. The S-palmitoyl cysteine moiety is linked to residue C8. Composition is skewed to basic and acidic residues over residues 11–23 (KSKEKKVVNEKPT), 73–83 (AAEKRNIEKKK), 90–105 (RQLEKERAKPMKEHLQ), and 112–121 (QQEREQIKWD).

It to yeast YGL108C. Myristoylated. Post-translationally, the N-myristoylated protein is further palmitoylated.

It is found in the cytoplasm. The protein localises to the cytosol. This is an uncharacterized protein from Schizosaccharomyces pombe (strain 972 / ATCC 24843) (Fission yeast).